A 1018-amino-acid polypeptide reads, in one-letter code: Isoleucine--tRNA ligase (1018 aa).

Residues 43–53 (PYTTGRIHLGT) carry the 'HIGH' region motif. The short motif at 586 to 590 (KMSKS) is the 'KMSKS' region element. Residue Lys589 participates in ATP binding.

The protein belongs to the class-I aminoacyl-tRNA synthetase family. IleS type 2 subfamily. As to quaternary structure, monomer. The cofactor is Zn(2+).

The protein localises to the cytoplasm. The enzyme catalyses tRNA(Ile) + L-isoleucine + ATP = L-isoleucyl-tRNA(Ile) + AMP + diphosphate. Functionally, catalyzes the attachment of isoleucine to tRNA(Ile). As IleRS can inadvertently accommodate and process structurally similar amino acids such as valine, to avoid such errors it has two additional distinct tRNA(Ile)-dependent editing activities. One activity is designated as 'pretransfer' editing and involves the hydrolysis of activated Val-AMP. The other activity is designated 'posttransfer' editing and involves deacylation of mischarged Val-tRNA(Ile). In Archaeoglobus fulgidus (strain ATCC 49558 / DSM 4304 / JCM 9628 / NBRC 100126 / VC-16), this protein is Isoleucine--tRNA ligase.